Here is a 635-residue protein sequence, read N- to C-terminus: Beta-mannosyltransferase 2 (635 aa).

At 1-6 (MRTRLN) the chain is on the cytoplasmic side. A helical membrane pass occupies residues 7–27 (FLLLCIASVLSVIWIGVLLTW). The Extracellular segment spans residues 28–635 (NDNNLGGISL…EKKEAEKKGK (608 aa)). N484 carries an N-linked (GlcNAc...) asparagine glycan. The stretch at 512–635 (TRGEAERRRR…EKKEAEKKGK (124 aa)) forms a coiled coil. Positions 517-635 (ERRRRVAEER…EKKEAEKKGK (119 aa)) are disordered.

The protein belongs to the BMT family.

It is found in the membrane. Beta-mannosyltransferase involved in cell wall biosynthesis. Initiates the beta-mannosylation of core N-linked glycans. This is Beta-mannosyltransferase 2 (BMT2) from Komagataella phaffii (strain ATCC 76273 / CBS 7435 / CECT 11047 / NRRL Y-11430 / Wegner 21-1) (Yeast).